Reading from the N-terminus, the 551-residue chain is E3 ubiquitin-protein ligase TRIM8 (551 aa).

Residues 15 to 56 form an RING-type zinc finger; that stretch reads CPICLHVFVEPVQLPCKHNFCRGCIGEAWAKDSGLVRCPECN. 2 consecutive B box-type zinc fingers follow at residues 92-132 and 140-182; these read CVFC…ARGH and VRAW…VCDV. 2 coiled-coil regions span residues 181–249 and 274–295; these read DVEI…DLRQ and ERMQ…KTED. Positions 399–457 are disordered; the sequence is QYGAAGTASSEGQSGQPLGPCSSTQHLVALPGGTQPVHSSPVFPPSQYPNGSTTQQPML. Composition is skewed to polar residues over residues 405–424 and 446–456; these read TASS…STQH and YPNGSTTQQPM.

This sequence belongs to the TRIM/RBCC family. In terms of assembly, homodimer. Interacts with SOCS1 (via) SH2 domain and SOCS box. Interacts with HSP90AB1; prevents nucleus translocation of phosphorylated STAT3 and HSP90AB1. Interacts with MAP3K7/TAK1. Interacts with PIAS3. Interacts with TICAM1. Interacts with TRIM15; this interaction prevents TRIM8 cytoplasmic translocation. In terms of tissue distribution, high expression in heart, liver, and thymus. Expressed in embryonic CNS, kidney, lens and gut.

It catalyses the reaction S-ubiquitinyl-[E2 ubiquitin-conjugating enzyme]-L-cysteine + [acceptor protein]-L-lysine = [E2 ubiquitin-conjugating enzyme]-L-cysteine + N(6)-ubiquitinyl-[acceptor protein]-L-lysine.. Its pathway is protein modification; protein ubiquitination. E3 ubiquitin-protein ligase that participates in multiple biological processes including cell survival, differentiation, apoptosis, and in particular, the innate immune response. Participates in the activation of interferon-gamma signaling by promoting proteasomal degradation of the repressor SOCS1. Plays a positive role in the TNFalpha and IL-1beta signaling pathways. Mechanistically, induces the 'Lys-63'-linked polyubiquitination of MAP3K7/TAK1 component leading to the activation of NF-kappa-B. Also modulates STAT3 activity through negative regulation of PIAS3, either by degradation of PIAS3 through the ubiquitin-proteasome pathway or exclusion of PIAS3 from the nucleus. Negatively regulates TLR3/4-mediated innate immune response by catalyzing 'Lys-6'- and 'Lys-33'-linked polyubiquitination of TICAM1 and thereby disrupting the TICAM1-TBK1 interaction. This Mus musculus (Mouse) protein is E3 ubiquitin-protein ligase TRIM8 (Trim8).